We begin with the raw amino-acid sequence, 207 residues long: High frequency lysogenization protein HflD homolog (207 aa).

The protein belongs to the HflD family.

Its subcellular location is the cytoplasm. The protein resides in the cell inner membrane. This is High frequency lysogenization protein HflD homolog from Cellvibrio japonicus (strain Ueda107) (Pseudomonas fluorescens subsp. cellulosa).